The following is a 366-amino-acid chain: 3-beta-hydroxysteroid dehydrogenase (366 aa).

Tyr154 (proton donor) is an active-site residue.

It belongs to the 3-beta-HSD family.

The catalysed reaction is testosterone + NAD(+) = androst-4-ene-3,17-dione + NADH + H(+). It catalyses the reaction testosterone + NADP(+) = androst-4-ene-3,17-dione + NADPH + H(+). Catalyzes the degradation of testosterone into androstenedione. In Mycolicibacterium neoaurum (Mycobacterium neoaurum), this protein is 3-beta-hydroxysteroid dehydrogenase.